Consider the following 771-residue polypeptide: MLVQDRAAPSPAKPPKSQIRELPTHQQIRRRFSEPKNLDFSTWFSENLSRIAVFSLLIVTIVAFFFLYNTTDTASLLCFQSQSTQFLQSLSRPQIKWNSIPVVPDKTSPYANFQTEKWIVVSVTKYPTEELKSLVKIRGWQVLAIGNSATPKDWSLKGSIFLSLDAQAELGYRVLDHLPYDSFVRKSVGYLFAIQHGAKKIYDADDRGEVIDGDLGKHFDVELVGLDSKQEPILQYSHENPNRTVVNPYIHFGQRSVWPRGLPLENVGEINHEEYYTEVFGGKQFIQQGISNGLPDVDSVFYFTRKTTLEAFDIRFDEHSPKVALPQGVMVPVNSFNTLYHSSAFWGLMLPVSVSSMASDVLRGYWGQRLLWELGGYVAVYPPTAHRFDRIEAYPFVEEKDLHVNVGRLIKFLLAWRSEKHSFFETVLDLSFAMAEEGFWTEQDLKFTAAWLQDLIAVGYQQPRLMSLELDRPRASIGHGDRKEFVPRKLPSVHLGVEETGTVSTEIGNLIRWRKNFGNVVLVMFCNGPVERTALEWRLLYGRIFKTVVILSSQKNSDLYVEEAKLDHIYKHLPKIFDRYSSAEGFLFVEDDTVLNYWNLLQADKSKIWTTDKVSKSWTSVKPTGNSDWFSVQAELVKKTVSTMPAHFQVNYKDATKNNHETLTVCSSEVFYVPKRLVTDFIDLVDLVGDMDLHYKVAVPMFFLSMDSPQNFDPVLGSMVYKRKSASFNTSSSLYSAKAPAVHPWSISSEQDFIKLVQQMAEGDPLLMELV.

The segment at Met1 to Pro23 is disordered. The Cytoplasmic segment spans residues Met1–Arg50. The chain crosses the membrane as a helical span at residues Ile51–Thr71. The Lumenal portion of the chain corresponds to Asp72–Val771. N-linked (GlcNAc...) asparagine glycans are attached at residues Asn242 and Asn729.

It belongs to the STELLO family. As to quaternary structure, homo- and heterodimer with STL2. Interacts with CESA1, CESA3, CESA4, CESA6, CESA7 and CESA8, but not with GOT1. In terms of tissue distribution, expressed in cells that are expanding or producing secondary cell walls.

The protein localises to the golgi apparatus membrane. Probable glycosyltransferase regulating the assembly and trafficking of cellulose synthase complexes. The polypeptide is Probable glycosyltransferase STELLO1 (Arabidopsis thaliana (Mouse-ear cress)).